A 51-amino-acid polypeptide reads, in one-letter code: Micropeptide inhibiting actin cytoskeleton (51 aa).

Residues 1–22 form a disordered region; the sequence is MERAGVPGFSPRRSSVEAKMQS.

In terms of assembly, interacts with aquaporin AQP2.

Functionally, reduces filamentous actin fibers by interacting with aquaporin AQP2 which leads to inhibition of the expression of SEPTIN4 and integrin ITGB4. Also inhibits the activation of the EREG/EGFR signaling pathway through interaction with AQP2. The chain is Micropeptide inhibiting actin cytoskeleton from Homo sapiens (Human).